The following is a 190-amino-acid chain: Dirigent protein 15 (190 aa).

Residues 1–19 form the signal peptide; it reads MKSTLIIFFTLCLSMAVMA. N-linked (GlcNAc...) asparagine glycosylation is found at Asn-63 and Asn-128.

This sequence belongs to the plant dirigent protein family. Homodimer.

The protein localises to the secreted. The protein resides in the extracellular space. Its subcellular location is the apoplast. Dirigent proteins impart stereoselectivity on the phenoxy radical-coupling reaction, yielding optically active lignans from two molecules of coniferyl alcohol in the biosynthesis of lignans, flavonolignans, and alkaloids and thus plays a central role in plant secondary metabolism. The sequence is that of Dirigent protein 15 (DIR15) from Arabidopsis thaliana (Mouse-ear cress).